A 460-amino-acid polypeptide reads, in one-letter code: Argininosuccinate lyase (460 aa).

The protein belongs to the lyase 1 family. Argininosuccinate lyase subfamily.

Its subcellular location is the cytoplasm. It carries out the reaction 2-(N(omega)-L-arginino)succinate = fumarate + L-arginine. It participates in amino-acid biosynthesis; L-arginine biosynthesis; L-arginine from L-ornithine and carbamoyl phosphate: step 3/3. This Leuconostoc mesenteroides subsp. mesenteroides (strain ATCC 8293 / DSM 20343 / BCRC 11652 / CCM 1803 / JCM 6124 / NCDO 523 / NBRC 100496 / NCIMB 8023 / NCTC 12954 / NRRL B-1118 / 37Y) protein is Argininosuccinate lyase.